Here is a 713-residue protein sequence, read N- to C-terminus: Mitochondrial intermediate peptidase (713 aa).

The transit peptide at Met1–Arg35 directs the protein to the mitochondrion. Residue Lys126 is modified to N6-acetyllysine. His495 is a Zn(2+) binding site. Glu496 is an active-site residue. Zn(2+)-binding residues include His499 and His502.

Belongs to the peptidase M3 family. Monomer. Requires Zn(2+) as cofactor.

The protein localises to the mitochondrion matrix. The catalysed reaction is Release of an N-terminal octapeptide as second stage of processing of some proteins imported into the mitochondrion.. With respect to regulation, activity is divalent cation-dependent. It is stimulated by manganese, magnesium or calcium ions and reversibly inhibited by zinc, cobalt and iron. Functionally, cleaves proteins, imported into the mitochondrion, to their mature size. The sequence is that of Mitochondrial intermediate peptidase (MIPEP) from Pongo abelii (Sumatran orangutan).